Reading from the N-terminus, the 300-residue chain is tRNA dimethylallyltransferase (300 aa).

11 to 18 (GPTAVGKS) contributes to the ATP binding site. A substrate-binding site is contributed by 13 to 18 (TAVGKS). The interval 35–38 (DSVQ) is interaction with substrate tRNA.

It belongs to the IPP transferase family. Monomer. Requires Mg(2+) as cofactor.

The catalysed reaction is adenosine(37) in tRNA + dimethylallyl diphosphate = N(6)-dimethylallyladenosine(37) in tRNA + diphosphate. Catalyzes the transfer of a dimethylallyl group onto the adenine at position 37 in tRNAs that read codons beginning with uridine, leading to the formation of N6-(dimethylallyl)adenosine (i(6)A). This Borrelia hermsii (strain HS1 / DAH) protein is tRNA dimethylallyltransferase.